The primary structure comprises 398 residues: Na(+)/H(+) antiporter NhaA (398 aa).

11 helical membrane-spanning segments follow: residues 14 to 34 (AAGVMLMMATVLALTFANWSV), 60 to 80 (LLLWINDGLMAIFFLLIGLEV), 96 to 116 (MLPLAAAVGGMVFPALFFLLF), 125 to 145 (VGWAIPAATDIAFAIGVLTLL), 155 to 175 (VFLLALAIIDDLGAILIIALF), 179 to 199 (QIFWPALGGAVLAVAALAYLN), 214 to 234 (IVLWVCILKCGVHATLAGVIV), 263 to 283 (FLIIPLFAFANAGIVLQGIVL), 292 to 312 (LGIAAGLLVGKPLGITLLSWL), 330 to 350 (IVAVSVLCGIGFTMSIFITLL), and 362 to 382 (YAKLGILLASGLAALLGYLAL).

This sequence belongs to the NhaA Na(+)/H(+) (TC 2.A.33) antiporter family.

It is found in the cell inner membrane. The catalysed reaction is Na(+)(in) + 2 H(+)(out) = Na(+)(out) + 2 H(+)(in). Its function is as follows. Na(+)/H(+) antiporter that extrudes sodium in exchange for external protons. This chain is Na(+)/H(+) antiporter NhaA, found in Pectobacterium carotovorum subsp. carotovorum (strain PC1).